The chain runs to 193 residues: Sarcoplasmic calcium-binding protein (193 aa).

3 consecutive EF-hand domains span residues 16–40, 57–92, and 101–136; these read MYDI…NTLI, IMSN…LCCG, and CFKT…RSAF. Ca(2+) contacts are provided by D18, D20, N22, Y24, D29, D70, N72, D74, Q76, E81, D114, N116, D118, and E125.

In terms of assembly, monomer and dimer. In terms of tissue distribution, skeletal muscle (at protein level).

Its function is as follows. Like parvalbumins, SCPs seem to be more abundant in fast contracting muscles, but no functional relationship can be established from this distribution. The protein is Sarcoplasmic calcium-binding protein of Scylla paramamosain (Mud crab).